Consider the following 283-residue polypeptide: uncharacterized protein (283 aa).

Positions 208 to 232 (SMENKVNETQNSKEDEKKKNDGDGK) are enriched in basic and acidic residues. Positions 208 to 237 (SMENKVNETQNSKEDEKKKNDGDGKRSKKK) are disordered.

This is an uncharacterized protein from Saccharomyces cerevisiae (strain ATCC 204508 / S288c) (Baker's yeast).